A 472-amino-acid chain; its full sequence is Adenylyl cyclase-associated protein 1 (472 aa).

N-acetylalanine is present on Ala-2. Position 31 is a phosphotyrosine (Tyr-31). Ser-34 bears the Phosphoserine mark. Position 81 is an N6-acetyllysine (Lys-81). Residues 216 to 253 (ELSGLPSGPSAGSGPPPPPPGPPPPPVPTSSGSDDSAS) are disordered. A compositionally biased stretch (low complexity) spans 218–228 (SGLPSGPSAGS). Pro residues predominate over residues 229 to 243 (GPPPPPPGPPPPPVP). The span at 244–253 (TSSGSDDSAS) shows a compositional bias: low complexity. Lys-287 carries the N6-methyllysine modification. A phosphoserine mark is found at Ser-290, Ser-295, and Ser-301. The segment at 290–312 (SGLIRSGPKPFSASKPDPPKPVA) is disordered. Positions 307–450 (PPKPVAKKEP…EGGDFNEFPV (144 aa)) constitute a C-CAP/cofactor C-like domain. A Glycyl lysine isopeptide (Lys-Gly) (interchain with G-Cter in SUMO1) cross-link involves residue Lys-345.

This sequence belongs to the CAP family. Homodimer. Binds actin monomers.

The protein resides in the cell membrane. Functionally, directly regulates filament dynamics and has been implicated in a number of complex developmental and morphological processes, including mRNA localization and the establishment of cell polarity. This chain is Adenylyl cyclase-associated protein 1 (CAP1), found in Bos taurus (Bovine).